The following is a 545-amino-acid chain: Sterol O-acyltransferase 1 (545 aa).

Met-1 is modified (N-acetylmethionine). The tract at residues 1–24 (MVGEETSLRNRLSRSAENPEQDEA) is disordered. The Cytoplasmic segment spans residues 1 to 133 (MVGEETSLRN…LDELFEVDHI (133 aa)). The residue at position 7 (Ser-7) is a Phosphoserine. Residues 9–18 (RNRLSRSAEN) are compositionally biased toward polar residues. A cholesterol-binding site is contributed by His-132. The helical transmembrane segment at 134–155 (RTIYHMFIALLIIFILSTLVVD) threads the bilayer. Topologically, residues 156–175 (YIDEGRLVLEFSLLAYAFGQ) are lumenal. The helical transmembrane segment at 176-201 (FPIVIWTWWAMFLSTLAIPYFLFQRW) threads the bilayer. At 202-213 (AHGYSKSSHPLI) the chain is on the cytoplasmic side. Residues 214–239 (YSLIHGAFFLVFQLGILGFIPTYVVL) form a helical membrane-spanning segment. The Lumenal segment spans residues 240–247 (AYTLPPAS). The chain crosses the membrane as a helical span at residues 248–271 (RFILILEQIRLVMKAHSYVRENVP). Residues 272–314 (RVLSAAKEKSSTVPVPTVNQYLYFLFAPTLIYRDSYPRTPTVR) lie on the Cytoplasmic side of the membrane. The helical transmembrane segment at 315–347 (WGYVAMQFLQVFGCLFYVYYIFERLCAPLFRNI) threads the bilayer. Residues 348-364 (KQEPFSARVLVLCVFNS) are Lumenal-facing. The helical transmembrane segment at 365–390 (ILPGVLMLFLSFFAFLHCWLNAFAEM) threads the bilayer. Over 391 to 438 (LRFGDRMFYKDWWNSTSYSNYYRTWNVVVHDWLYYYVYKDLLWFFSKR) the chain is Cytoplasmic. Residues 398-404 (FYKDWWN) carry the FYXDWWN motif motif. 6 residues coordinate an acyl-CoA: Asn-410, Arg-413, Asn-416, His-420, Tyr-428, and Ser-451. Residues 439 to 463 (FRPAAMLAVFALSAVVHEYALAVCL) traverse the membrane as a helical segment. His-455 is an active-site residue. Residues 464–469 (SYFYPV) are Lumenal-facing. Residues 470–485 (LFVLFMFFGMAFNFIV) traverse the membrane as a helical segment. The Cytoplasmic segment spans residues 486 to 491 (NDSRKR). A helical membrane pass occupies residues 492 to 523 (PVWNIMVRASLFLGHGVILCFYSQEWYARQRC). Cys-523 and Cys-541 are oxidised to a cystine. The Lumenal segment spans residues 524 to 545 (PLKNPTFLDYVRPRTWTCRYVF).

Belongs to the membrane-bound acyltransferase family. Sterol o-acyltransferase subfamily. As to quaternary structure, may form homo- or heterodimers. Interacts with UBIAD1.

Its subcellular location is the endoplasmic reticulum membrane. The enzyme catalyses a sterol + a long-chain fatty acyl-CoA = a long-chain 3-hydroxysterol ester + CoA. The catalysed reaction is cholesterol + an acyl-CoA = a cholesterol ester + CoA. It carries out the reaction cholesterol + (9Z)-octadecenoyl-CoA = cholesteryl (9Z-octadecenoate) + CoA. It catalyses the reaction cholesterol + hexadecanoyl-CoA = cholesteryl hexadecanoate + CoA. The enzyme catalyses octadecanoyl-CoA + cholesterol = cholesteryl octadecanoate + CoA. The catalysed reaction is (9Z,12Z)-octadecadienoyl-CoA + cholesterol = cholesteryl (9Z,12Z)-octadecadienoate + CoA. It carries out the reaction (5Z,8Z,11Z,14Z)-eicosatetraenoyl-CoA + cholesterol = cholesteryl (5Z,8Z,11Z,14Z)-eicosatetraenoate + CoA. It catalyses the reaction (9Z)-hexadecenoyl-CoA + cholesterol = cholesteryl (9Z)-hexadecenoate + CoA. The enzyme catalyses (11Z)-octadecenoyl-CoA + cholesterol = cholesteryl (11Z)-octadecenoate + CoA. The catalysed reaction is (7Z)-octadecenoyl-CoA + cholesterol = cholesteryl (7Z)-octadecenoate + CoA. Catalyzes the formation of fatty acid-cholesterol esters, which are less soluble in membranes than cholesterol. Plays a role in lipoprotein assembly and dietary cholesterol absorption. Preferentially utilizes oleoyl-CoA ((9Z)-octadecenoyl-CoA) as substrate: shows a higher activity towards an acyl-CoA substrate with a double bond at the delta-9 position (9Z) than towards saturated acyl-CoA or an unsaturated acyl-CoA with a double bond at the delta-7 (7Z) or delta-11 (11Z) positions. This chain is Sterol O-acyltransferase 1, found in Rattus norvegicus (Rat).